We begin with the raw amino-acid sequence, 510 residues long: MSKSPVAIIILDGFGKRAETVGNAVAQANKPNFDRYWADFPHGELKAAGLDVGLPEGQMGNSEVGHTNIGAGRIVYQSLTRIDKAIEEGEFQENKALNNAFTHTKENNSDLHLFGLLSDGGVHSHINHLVALLETAKDKGVKNVYIHAFLDGRDVAPQSSLEYLETLQKAISDLNYGAIATVSGRFYAMDRDKRWERVEKAYKAIVSAEGEKFEDPIELVKASYANDKNDEFVVPAIITKDGKPVATVKDNDAVIFFNFRPDRAIQLSNAFTDKEWDHFDRGADHPKNIKFVTMTLYNPSIDAEVAFEPIEMKNVIGEVLSNEGLSQLRIAETEKYPHVTFFMNGGRNEEFPGENRILINSPKVETYDLQPEMSAYEVTDALVEDIKNDKHDAIILNFANPDMVGHSGMLEPTIKAIEAVDENLGRVVDLILEKGGSAIIFADHGNSETMSTPEGKPHTAHTTVPVPVIVTKKGVTLREGGRLADVAPTMLDLLGVKKPAEMTGESLIQK.

Positions 12 and 62 each coordinate Mn(2+). S62 (phosphoserine intermediate) is an active-site residue. Substrate is bound by residues H123, 153–154 (RD), R185, R191, 260–263 (RPDR), and K335. Residues D402, H406, D443, H444, and H461 each coordinate Mn(2+).

Belongs to the BPG-independent phosphoglycerate mutase family. In terms of assembly, monomer. Mn(2+) is required as a cofactor.

It carries out the reaction (2R)-2-phosphoglycerate = (2R)-3-phosphoglycerate. It participates in carbohydrate degradation; glycolysis; pyruvate from D-glyceraldehyde 3-phosphate: step 3/5. Its function is as follows. Catalyzes the interconversion of 2-phosphoglycerate and 3-phosphoglycerate. The polypeptide is 2,3-bisphosphoglycerate-independent phosphoglycerate mutase (Listeria monocytogenes serovar 1/2a (strain ATCC BAA-679 / EGD-e)).